The primary structure comprises 434 residues: Adenylosuccinate synthetase (434 aa).

Residues 13-19 (GDEGKGK) and 41-43 (GHT) contribute to the GTP site. Asp-14 serves as the catalytic Proton acceptor. Mg(2+) contacts are provided by Asp-14 and Gly-41. Residues 14–17 (DEGK), 39–42 (NAGH), Thr-133, Arg-147, Gln-228, Thr-243, and Arg-307 contribute to the IMP site. Catalysis depends on His-42, which acts as the Proton donor. Residue 303 to 309 (STTGRKR) coordinates substrate. Residues Arg-309, 335-337 (KID), and 417-419 (STG) contribute to the GTP site.

The protein belongs to the adenylosuccinate synthetase family. As to quaternary structure, homodimer. The cofactor is Mg(2+).

It localises to the cytoplasm. The enzyme catalyses IMP + L-aspartate + GTP = N(6)-(1,2-dicarboxyethyl)-AMP + GDP + phosphate + 2 H(+). The protein operates within purine metabolism; AMP biosynthesis via de novo pathway; AMP from IMP: step 1/2. Plays an important role in the de novo pathway of purine nucleotide biosynthesis. Catalyzes the first committed step in the biosynthesis of AMP from IMP. This Wigglesworthia glossinidia brevipalpis protein is Adenylosuccinate synthetase.